Consider the following 475-residue polypeptide: MSPQTETKASVGFKAGVKDYKLTYYTPDYETKDTDILAAFRVTPQPGVPPEEAGAAVAAESSTGTWTTVWTDGLTSLDRYKGRCYHIEPVAGEENQYIAYVAYPLDLFEEGSVTNMFTSIVGNVFGFKALRALRLEDLRIPPAYSKTFQGPPHGIQVERDKLNKYGRPLLGCTIKPKLGLSAKNYGRAVYECLRGGLDFTKDDENVNSQPFMRWRDRFLFCAEAIYKAQAETGEIKGHYLNATAGTCEEMIKRAVFARELGVPIVMHDYLTGGFTANTSLAHYCRDNGLLLHIHRAMHAVIDRQKNHGIHFRVLAKALRMSGGDHIHAGTVVGKLEGEREITLGFVDLLRDDFIEKDRSRGIYFTQDWVSLPGVLPVASGGIHVWHMPALTEIFGDDSVLQFGGGTLGHPWGNAPGAVANRVALEACVQARNEGRDLAREGNEIIREACKWSPELAAACEVWKEIKFEFEAMDTL.

Positions 1-2 (MS) are excised as a propeptide. At Pro-3 the chain carries N-acetylproline. Lys-14 carries the post-translational modification N6,N6,N6-trimethyllysine. Substrate is bound by residues Asn-123 and Thr-173. Lys-175 (proton acceptor) is an active-site residue. Lys-177 contacts substrate. The Mg(2+) site is built by Lys-201, Asp-203, and Glu-204. Lys-201 is modified (N6-carboxylysine). His-294 (proton acceptor) is an active-site residue. Arg-295, His-327, and Ser-379 together coordinate substrate.

Belongs to the RuBisCO large chain family. Type I subfamily. As to quaternary structure, heterohexadecamer of 8 large chains and 8 small chains; disulfide-linked. The disulfide link is formed within the large subunit homodimers. Mg(2+) serves as cofactor. Post-translationally, the disulfide bond which can form in the large chain dimeric partners within the hexadecamer appears to be associated with oxidative stress and protein turnover.

Its subcellular location is the plastid. The protein localises to the chloroplast. It carries out the reaction 2 (2R)-3-phosphoglycerate + 2 H(+) = D-ribulose 1,5-bisphosphate + CO2 + H2O. The catalysed reaction is D-ribulose 1,5-bisphosphate + O2 = 2-phosphoglycolate + (2R)-3-phosphoglycerate + 2 H(+). Functionally, ruBisCO catalyzes two reactions: the carboxylation of D-ribulose 1,5-bisphosphate, the primary event in carbon dioxide fixation, as well as the oxidative fragmentation of the pentose substrate in the photorespiration process. Both reactions occur simultaneously and in competition at the same active site. The polypeptide is Ribulose bisphosphate carboxylase large chain (Platanus occidentalis (Sycamore)).